An 896-amino-acid chain; its full sequence is Alanine--tRNA ligase (896 aa).

Residues His-574, His-578, Cys-677, and His-681 each contribute to the Zn(2+) site.

It belongs to the class-II aminoacyl-tRNA synthetase family. It depends on Zn(2+) as a cofactor.

It localises to the cytoplasm. The enzyme catalyses tRNA(Ala) + L-alanine + ATP = L-alanyl-tRNA(Ala) + AMP + diphosphate. In terms of biological role, catalyzes the attachment of alanine to tRNA(Ala) in a two-step reaction: alanine is first activated by ATP to form Ala-AMP and then transferred to the acceptor end of tRNA(Ala). Also edits incorrectly charged Ser-tRNA(Ala) and Gly-tRNA(Ala) via its editing domain. This is Alanine--tRNA ligase from Mycoplasma capricolum subsp. capricolum (strain California kid / ATCC 27343 / NCTC 10154).